A 282-amino-acid polypeptide reads, in one-letter code: Glutamate racemase (282 aa).

Residues 13–14 and 45–46 contribute to the substrate site; these read DS and YG. Cysteine 76 (proton donor/acceptor) is an active-site residue. Residue 77–78 coordinates substrate; sequence NT. The active-site Proton donor/acceptor is cysteine 186. A substrate-binding site is contributed by 187-188; the sequence is TH.

It belongs to the aspartate/glutamate racemases family.

The catalysed reaction is L-glutamate = D-glutamate. The protein operates within cell wall biogenesis; peptidoglycan biosynthesis. Its function is as follows. Provides the (R)-glutamate required for cell wall biosynthesis. The protein is Glutamate racemase of Ralstonia pickettii (strain 12J).